The sequence spans 1173 residues: Pleckstrin homology domain-containing family A member 6 (1173 aa).

The span at 1–22 (MSNKTGGKRSATINSDIANHNM) shows a compositional bias: polar residues. Residues 1–39 (MSNKTGGKRSATINSDIANHNMVSEVPPERPNIRATRTS) form a disordered region. The 100-residue stretch at 59 to 158 (PVTKAGWLYK…WIQAMGEAAR (100 aa)) folds into the PH domain. The disordered stretch occupies residues 163-346 (PAQKSVPQPV…PSRFYPMPRR (184 aa)). The segment covering 201–233 (LEPEAKTRGEGDGRGCEKAERRPERPEVKKETL) has biased composition (basic and acidic residues). Phosphoserine occurs at positions 247 and 251. Polar residues-rich tracts occupy residues 270 to 281 (NGWQYSSPSRPG) and 311 to 322 (RKSSMNQLQQWV). A phosphoserine mark is found at serine 314, serine 459, serine 461, and serine 472. Tyrosine 492 carries the phosphotyrosine modification. Residue serine 665 is modified to Phosphoserine. 2 disordered regions span residues 737 to 872 (RKNN…PRDI) and 888 to 984 (ALNK…RPAY). Low complexity-rich tracts occupy residues 761–782 (SSNS…SPFS) and 789–799 (GSPTKPGSSEE). The span at 815–824 (ESPPTVPPLP) shows a compositional bias: pro residues. Serine 864 is subject to Phosphoserine. Phosphothreonine is present on threonine 868. Serine 901 bears the Phosphoserine mark. At threonine 908 the chain carries Phosphothreonine. Polar residues predominate over residues 915 to 926 (RTTNGLTNGLSS). The residue at position 925 (serine 925) is a Phosphoserine. Basic and acidic residues predominate over residues 940–952 (GKVKMSVEEQMDR). A compositionally biased stretch (basic residues) spans 953–967 (MRRHQSGSMKEKRRS). Serine 973, serine 979, and serine 992 each carry phosphoserine. At threonine 1045 the chain carries Phosphothreonine. Serine 1065 carries the phosphoserine modification. 2 disordered regions span residues 1093–1114 (PIGE…QEQE) and 1130–1173 (RGRM…TMRV). Position 1140 is a phosphothreonine (threonine 1140). Positions 1141 to 1155 (PSPPTSPASPTPPVN) are enriched in pro residues. Serine 1142 carries the post-translational modification Phosphoserine. A Phosphothreonine modification is found at threonine 1145. Phosphoserine is present on residues serine 1146 and serine 1149. The residue at position 1151 (threonine 1151) is a Phosphothreonine.

This is Pleckstrin homology domain-containing family A member 6 (Plekha6) from Mus musculus (Mouse).